Consider the following 148-residue polypeptide: Receptor activity-modifying protein 1 (148 aa).

The N-terminal stretch at 1-26 (MAPGLRGLPRCGLWLLLAHHLFMVTA) is a signal peptide. 3 disulfides stabilise this stretch: Cys27/Cys82, Cys40/Cys72, and Cys57/Cys104. The Extracellular segment spans residues 27 to 118 (CRDPDYGTLI…RALRDPPNSI (92 aa)). A helical membrane pass occupies residues 119–140 (LCPFIALPITVTLLMTALVVWR). At 141 to 148 (SKRTEGIV) the chain is on the cytoplasmic side.

This sequence belongs to the RAMP family. In terms of assembly, heterodimer of CALCRL and RAMP1; the interaction induces allosteric modulation of CALCRL function and CGRP1/CALCA and CGRP2/CALCB ligand specificity. Heterodimer of CALCR and RAMP1; interaction forms the AMYR1 receptor complex for amylin/IAPP and CGRP1/CALCA ligands. As to expression, expressed predominantly in the thymus, skeletal muscle, embryonic and adult brain, embryonic and adult lung, and colon.

The protein resides in the cell membrane. Its function is as follows. Accessory protein that interacts with and modulates the function of G-protein coupled receptors including calcitonin gene-related peptide type 1 receptor (CALCRL) and calcitonin receptor (CALCR). Required for the transport of CALCRL to the plasma membrane. Together with CALCRL, form the receptor complex for the calcitonin gene-related peptides CGRP1/CALCA and CGRP2/CALCB. Together with CALCR, form the AMYR1 receptor complex for amylin/IAPP and CGRP1/CALCA. The protein is Receptor activity-modifying protein 1 of Mus musculus (Mouse).